The chain runs to 147 residues: RxLR effector protein Avr3a (147 aa).

A signal peptide spans 1 to 21 (MRLAIMLSATAVAINFATCSA). The RxLR-dEER signature appears at 44–59 (RLLRKNEENEETSEER). Residue Lys48 is modified to N6-acetyllysine. The segment at 77-147 (ALTKRADAKK…YMMHLGLTGY (71 aa)) is effector domain.

This sequence belongs to the RxLR effector family. Forms homodimers via the RxLR-dEER motif. Interacts with host E3 ligase CMPG1. Interacts with host DRP2. In terms of processing, proteolytically cleaved. The cleavage site directly after the RxLR sequence and the high conservation among other effector proteins suggest that the RxLR motif might play a crucial role in the intracellular processing before secretion. Glycosylated. Post-translationally, N-acetylated at Lys-48 after cleavage.

The protein resides in the secreted. Its subcellular location is the host cytoplasm. It is found in the host endosome. Functionally, multifunctional effector that can suppress host BAK1/SERK3-mediated immunity through at least two different pathways. Manipulates plant immunity by targeting and stabilizing host E3 ligase CMPG1. Preventing the normal 26S proteasome-dependent degradation of potato CMPG1, and thus potentially of its protein substrates in the host cell, further abolishes host cell death during the biotrophic phase of infection. Also associates with the dynamin-related protein 2 (DRP2), a plant GTPase involved in immune receptor-mediated endocytosis. The Avr3A(KI) form is recognized by R3a which triggers R3a-mediated hypersensitivity and suppresses INF1-induced cell death. The sequence is that of RxLR effector protein Avr3a from Phytophthora infestans (Potato late blight agent).